Reading from the N-terminus, the 38-residue chain is Trypsin inhibitor DE5 beta chain (38 aa).

This sequence belongs to the protease inhibitor I3 (leguminous Kunitz-type inhibitor) family. As to quaternary structure, heterodimer of an alpha and a beta chain linked by a disulfide bond.

Inhibition of trypsin. The protein is Trypsin inhibitor DE5 beta chain of Adenanthera pavonina (Sandal bead tree).